We begin with the raw amino-acid sequence, 428 residues long: Enolase (428 aa).

Position 163 (Q163) interacts with (2R)-2-phosphoglycerate. E205 serves as the catalytic Proton donor. D242, E285, and D312 together coordinate Mg(2+). Positions 337, 366, 367, and 388 each coordinate (2R)-2-phosphoglycerate. Residue K337 is the Proton acceptor of the active site.

It belongs to the enolase family. It depends on Mg(2+) as a cofactor.

The protein localises to the cytoplasm. Its subcellular location is the secreted. It localises to the cell surface. The enzyme catalyses (2R)-2-phosphoglycerate = phosphoenolpyruvate + H2O. Its pathway is carbohydrate degradation; glycolysis; pyruvate from D-glyceraldehyde 3-phosphate: step 4/5. Functionally, catalyzes the reversible conversion of 2-phosphoglycerate (2-PG) into phosphoenolpyruvate (PEP). It is essential for the degradation of carbohydrates via glycolysis. The polypeptide is Enolase (Neisseria meningitidis serogroup A / serotype 4A (strain DSM 15465 / Z2491)).